The sequence spans 245 residues: Large ribosomal subunit protein uL29m (245 aa).

Composition is skewed to low complexity over residues 36-49 (SFNSQRSQFSTSSS) and 234-245 (STKSETTTSKNI). 2 disordered regions span residues 36-98 (SFNS…NPDH) and 207-245 (RPSPDEVLEEETETAMPTEVMPEELDSSTKSETTTSKNI).

It belongs to the universal ribosomal protein uL29 family. As to quaternary structure, component of the mitochondrial large ribosomal subunit. Mature mitochondrial ribosomes consist of a small (37S) and a large (54S) subunit. The 37S subunit contains at least 33 different proteins and 1 molecule of RNA (15S). The 54S subunit contains at least 45 different proteins and 1 molecule of RNA (21S).

It localises to the mitochondrion. The sequence is that of Large ribosomal subunit protein uL29m (MRPL4) from Coccidioides immitis (strain RS) (Valley fever fungus).